The following is a 475-amino-acid chain: Ribulose bisphosphate carboxylase large chain (475 aa).

A propeptide spanning residues 1–2 (MS) is cleaved from the precursor. Residue Pro-3 is modified to N-acetylproline. At Lys-14 the chain carries N6,N6,N6-trimethyllysine. Substrate-binding residues include Asn-123 and Thr-173. Lys-175 acts as the Proton acceptor in catalysis. Residue Lys-177 participates in substrate binding. Mg(2+)-binding residues include Lys-201, Asp-203, and Glu-204. The residue at position 201 (Lys-201) is an N6-carboxylysine. His-294 (proton acceptor) is an active-site residue. Substrate is bound by residues Arg-295, His-327, and Ser-379.

This sequence belongs to the RuBisCO large chain family. Type I subfamily. In terms of assembly, heterohexadecamer of 8 large chains and 8 small chains; disulfide-linked. The disulfide link is formed within the large subunit homodimers. The cofactor is Mg(2+). Post-translationally, the disulfide bond which can form in the large chain dimeric partners within the hexadecamer appears to be associated with oxidative stress and protein turnover.

The protein localises to the plastid. Its subcellular location is the chloroplast. It carries out the reaction 2 (2R)-3-phosphoglycerate + 2 H(+) = D-ribulose 1,5-bisphosphate + CO2 + H2O. It catalyses the reaction D-ribulose 1,5-bisphosphate + O2 = 2-phosphoglycolate + (2R)-3-phosphoglycerate + 2 H(+). Its function is as follows. RuBisCO catalyzes two reactions: the carboxylation of D-ribulose 1,5-bisphosphate, the primary event in carbon dioxide fixation, as well as the oxidative fragmentation of the pentose substrate in the photorespiration process. Both reactions occur simultaneously and in competition at the same active site. The protein is Ribulose bisphosphate carboxylase large chain of Castanea sativa (Sweet chestnut).